The primary structure comprises 66 residues: Large ribosomal subunit protein bL35 (66 aa).

This sequence belongs to the bacterial ribosomal protein bL35 family.

In Borreliella burgdorferi (strain ATCC 35210 / DSM 4680 / CIP 102532 / B31) (Borrelia burgdorferi), this protein is Large ribosomal subunit protein bL35.